The sequence spans 324 residues: Olfactory receptor 5T17 (324 aa).

Residues 1 to 37 (MPRTPSYTNTKTTQVNNVTEITVFILLGFTDDVDMNI) are Extracellular-facing. An N-linked (GlcNAc...) asparagine glycan is attached at asparagine 17. A helical transmembrane segment spans residues 38-58 (FLFILFLAIYVVTLIGNLGLV). Over 59-66 (VLVIEDSR) the chain is Cytoplasmic. The helical transmembrane segment at 67–87 (LHNPMYYFLTVLSSLDACFSS) threads the bilayer. Residues 88–111 (VLTPKMLVNFLSKNKSISFAGCAT) are Extracellular-facing. A glycan (N-linked (GlcNAc...) asparagine) is linked at asparagine 101. A disulfide bridge connects residues cysteine 109 and cysteine 201. Residues 112–132 (QMLLFVTFGTTECFLLAAMAY) form a helical membrane-spanning segment. Residues 133 to 145 (DRYLAIYSPLLYA) are Cytoplasmic-facing. A helical transmembrane segment spans residues 146–166 (VRMSPRVYVPLIIASYTGGIL). Topologically, residues 167-208 (HATIHTVATFSLSFCGSNEIRHVFCDIPPLLALSCSDTHLNQ) are extracellular. The helical transmembrane segment at 209-229 (LLLFYCAGSIELITILIVLVS) threads the bilayer. At 230 to 249 (YGFVLLAILKINSAEGRRKI) the chain is on the cytoplasmic side. The helical transmembrane segment at 250–270 (FSTCGAHLTGVSIFHGTILFM) threads the bilayer. Residues 271–283 (YVRPSSNYTLEQD) are Extracellular-facing. The N-linked (GlcNAc...) asparagine glycan is linked to asparagine 277. The chain crosses the membrane as a helical span at residues 284–304 (MVVSTFYTIVIPMLNPIIYSL). The Cytoplasmic segment spans residues 305–324 (RNKDVKEAMRKLLKRKLVHE).

It belongs to the G-protein coupled receptor 1 family.

Its subcellular location is the cell membrane. Potential odorant receptor. The chain is Olfactory receptor 5T17 from Mus musculus (Mouse).